We begin with the raw amino-acid sequence, 245 residues long: Probable transcriptional regulatory protein Ddes_0536 (245 aa).

Residues 1 to 21 (MAGHSKWANIQHRKGRQDAKR) are disordered.

The protein belongs to the TACO1 family.

It is found in the cytoplasm. This is Probable transcriptional regulatory protein Ddes_0536 from Desulfovibrio desulfuricans (strain ATCC 27774 / DSM 6949 / MB).